We begin with the raw amino-acid sequence, 421 residues long: Adenylosuccinate synthetase (421 aa).

Residues 11–17 and 39–41 contribute to the GTP site; these read GDEGKGK and GHT. Catalysis depends on D12, which acts as the Proton acceptor. Residues D12 and G39 each coordinate Mg(2+). IMP contacts are provided by residues 12–15, 37–40, T129, R143, N219, T234, and R298; these read DEGK and NAGH. Catalysis depends on H40, which acts as the Proton donor. A substrate-binding site is contributed by 294-300; it reads VTTGRRR. Residues R300, 326–328, and 409–411 contribute to the GTP site; these read KLD and GTG.

It belongs to the adenylosuccinate synthetase family. Homodimer. The cofactor is Mg(2+).

It localises to the cytoplasm. It carries out the reaction IMP + L-aspartate + GTP = N(6)-(1,2-dicarboxyethyl)-AMP + GDP + phosphate + 2 H(+). The protein operates within purine metabolism; AMP biosynthesis via de novo pathway; AMP from IMP: step 1/2. Its function is as follows. Plays an important role in the de novo pathway and in the salvage pathway of purine nucleotide biosynthesis. Catalyzes the first committed step in the biosynthesis of AMP from IMP. In Paracoccidioides lutzii (strain ATCC MYA-826 / Pb01) (Paracoccidioides brasiliensis), this protein is Adenylosuccinate synthetase.